Consider the following 682-residue polypeptide: MNSNLRKKVTLAGLLVSIGIVYGDIGTSPLYVMKAIVNENGGIAHVSREYIVGSISLILWTITLLTTVKYVLIALKATNHGEGGIFSLYALVRKKAKWLVIPALVGGAALLADGTLTPAVTVTTAIEGLKNMKFGNDIPVPNQNSVIMITIVILLFLFSIQRMGTSIIGKTFGPIMLVWFTFLGLTGIMNLSHDWSLLEALNPLLAVKILFSPANKVGVLILGAVFLATTGAEALYSDVGHVGKGNIMGSWPYVFICLALNYLGQGVWILENPNYHAGATDFNPFFEALPSQWKFFAIILATLAAIIASQALITGSFTLVSEASGLKFLPRMKIIYPSTEQGQLFIPSINKMLCAATIGIVFLFRTSEHMEAAYGLAITVTMLMTTVLLFEYLSLRKVNLSLRLVFLLLFGAIETMFLISSLAKFLHGGYVTVIIAAFIGAIMYIWYFGNKIRDKREAENAYVRLDEFTTMLSNLSHDESIPLYATNLVYMAKVKYNKFIKRDMLYSILDKRPKRAHAYWFVTVNVTNEPFTAEYAVNTYGTKNVINVQLYLGFKQQQKVNVYLRQIVHDLIKDGTIESQPQEYTTTPGRDVGDFSFVIVNDVISPQTQLRSYEKFLVEARVWLQNLSSNPASWFGLDYADTVIERVPLILGNQRRQHITRIAPKKFEDIKKKLQAEGELKE.

The next 12 membrane-spanning stretches (helical) occupy residues 13 to 33, 55 to 75, 98 to 118, 138 to 158, 171 to 191, 217 to 237, 250 to 270, 295 to 315, 344 to 364, 375 to 395, 405 to 425, and 428 to 448; these read GLLV…LYVM, ISLI…LIAL, WLVI…TLTP, IPVP…LFLF, TFGP…IMNL, VGVL…ALYS, SWPY…VWIL, FFAI…LITG, LFIP…VFLF, GLAI…YLSL, VFLL…LAKF, and GGYV…IWYF.

The protein belongs to the HAK/KUP transporter (TC 2.A.72) family.

Its subcellular location is the cell membrane. It catalyses the reaction K(+)(in) + H(+)(in) = K(+)(out) + H(+)(out). Its function is as follows. Transport of potassium into the cell. Likely operates as a K(+):H(+) symporter. The sequence is that of Probable potassium transport system protein Kup from Lactobacillus gasseri (strain ATCC 33323 / DSM 20243 / BCRC 14619 / CIP 102991 / JCM 1131 / KCTC 3163 / NCIMB 11718 / NCTC 13722 / AM63).